Reading from the N-terminus, the 136-residue chain is Large ribosomal subunit protein uL16 (136 aa).

This sequence belongs to the universal ribosomal protein uL16 family. In terms of assembly, part of the 50S ribosomal subunit.

In terms of biological role, binds 23S rRNA and is also seen to make contacts with the A and possibly P site tRNAs. This is Large ribosomal subunit protein uL16 from Alteromonas mediterranea (strain DSM 17117 / CIP 110805 / LMG 28347 / Deep ecotype).